The primary structure comprises 461 residues: Fumarate hydratase class II (461 aa).

Substrate-binding positions include 97-99 (SGT), Arg125, 128-131 (HPND), 138-140 (SSN), and Thr186. The active-site Proton donor/acceptor is the His187. The active site involves Ser317. Substrate-binding positions include Ser318 and 323–325 (KVN).

The protein belongs to the class-II fumarase/aspartase family. Fumarase subfamily. In terms of assembly, homotetramer.

Its subcellular location is the cytoplasm. It carries out the reaction (S)-malate = fumarate + H2O. Its pathway is carbohydrate metabolism; tricarboxylic acid cycle; (S)-malate from fumarate: step 1/1. Its function is as follows. Involved in the TCA cycle. Catalyzes the stereospecific interconversion of fumarate to L-malate. The sequence is that of Fumarate hydratase class II from Ralstonia nicotianae (strain ATCC BAA-1114 / GMI1000) (Ralstonia solanacearum).